Consider the following 520-residue polypeptide: NADH-quinone oxidoreductase subunit N (520 aa).

The next 14 helical transmembrane spans lie at 13–33, 55–75, 87–107, 115–135, 141–161, 176–196, 219–239, 250–270, 285–305, 313–333, 339–359, 383–403, 425–445, and 468–488; these read ALLP…ASVW, FGVI…GDGA, GFRW…LMLL, AAFG…MMVL, LMFV…LAGV, FLLG…LFGA, FMSG…AAPF, APLP…FAVF, WHMG…VFAL, MLAY…IVGD, ALIF…GVLI, WLAI…VLGG, ILAV…LAVV, and SLIA…TPIM. Residues 494–508 show a composition bias toward low complexity; sequence ATTTTSPTSNPAAPR. The tract at residues 494 to 520 is disordered; sequence ATTTTSPTSNPAAPRGEVRLQTASVPR.

Belongs to the complex I subunit 2 family. NDH-1 is composed of 14 different subunits. Subunits NuoA, H, J, K, L, M, N constitute the membrane sector of the complex.

The protein localises to the cell inner membrane. It carries out the reaction a quinone + NADH + 5 H(+)(in) = a quinol + NAD(+) + 4 H(+)(out). NDH-1 shuttles electrons from NADH, via FMN and iron-sulfur (Fe-S) centers, to quinones in the respiratory chain. The immediate electron acceptor for the enzyme in this species is believed to be ubiquinone. Couples the redox reaction to proton translocation (for every two electrons transferred, four hydrogen ions are translocated across the cytoplasmic membrane), and thus conserves the redox energy in a proton gradient. In Gemmatimonas aurantiaca (strain DSM 14586 / JCM 11422 / NBRC 100505 / T-27), this protein is NADH-quinone oxidoreductase subunit N.